Consider the following 221-residue polypeptide: uncharacterized protein (221 aa).

The next 6 membrane-spanning stretches (helical) occupy residues 33–55, 70–92, 99–121, 125–147, 154–176, and 186–208; these read YFLL…ISYI, FGYR…QKIV, LEML…FIII, YGAY…YTLL, YFND…SFWI, and IISM…ITLI.

It localises to the cell membrane. This is an uncharacterized protein from Aquifex aeolicus (strain VF5).